Consider the following 520-residue polypeptide: Fusaridione A cluster transcription factor fsdR (520 aa).

The segment at 1–30 (MSTGPPSGISLVSMTTPRKSGQHTPESWSK) is disordered.

The protein localises to the nucleus. Transcription factor that regulates the expression of the gene cluster that mediates the biosynthesis of fusaridione A. This Fusarium heterosporum protein is Fusaridione A cluster transcription factor fsdR.